The primary structure comprises 394 residues: Queuine tRNA-ribosyltransferase accessory subunit 2 (394 aa).

Residues cysteine 336, cysteine 338, cysteine 341, and histidine 367 each coordinate Zn(2+).

Belongs to the queuine tRNA-ribosyltransferase family. QTRT2 subfamily. Heterodimer of a catalytic subunit and an accessory subunit. The cofactor is Zn(2+).

The protein resides in the cytoplasm. Non-catalytic subunit of the queuine tRNA-ribosyltransferase (TGT) that catalyzes the base-exchange of a guanine (G) residue with queuine (Q) at position 34 (anticodon wobble position) in tRNAs with GU(N) anticodons (tRNA-Asp, -Asn, -His and -Tyr), resulting in the hypermodified nucleoside queuosine (7-(((4,5-cis-dihydroxy-2-cyclopenten-1-yl)amino)methyl)-7-deazaguanosine). This is Queuine tRNA-ribosyltransferase accessory subunit 2 from Ixodes scapularis (Black-legged tick).